Consider the following 168-residue polypeptide: Mitochondrial inner membrane protein SHH4 (168 aa).

The transit peptide at 1 to 23 (MSSTKFLKPLCRIRAFHTSIARS) directs the protein to the mitochondrion. At 24–65 (FTIPFLPKIPQKPGGVSGTANDSSYMPPESRAQGSYHWIVER) the chain is on the mitochondrial matrix side. A helical transmembrane segment spans residues 66–86 (GLSLAVLPLIAVPLVTTGPIS). At 87–92 (TFTDTF) the chain is on the mitochondrial intermembrane side. Residues 93 to 113 (LSLVLLGHCHIGFQSCIIDYI) traverse the membrane as a helical segment. C101 contributes to the heme binding site. An a ubiquinone-binding site is contributed by Y112. Over 114-120 (SERVYGK) the chain is Mitochondrial matrix. Residues 121 to 141 (VHHYAMYLLSLGSFLSFVGIY) form a helical membrane-spanning segment. Over 142 to 168 (KLESQEAGLIASLKSLWDNKPVEKKRQ) the chain is Mitochondrial intermembrane.

It belongs to the CybS family. Interacts with SDH3.

The protein resides in the mitochondrion inner membrane. Functionally, homolog of SDH4, but seems not to be a stoichiometric subunit of either the succinate dehydrogenase (SDH) complex or the mitochondrial inner membrane translocase TIM22 complex. In Saccharomyces cerevisiae (strain ATCC 204508 / S288c) (Baker's yeast), this protein is Mitochondrial inner membrane protein SHH4.